Here is a 135-residue protein sequence, read N- to C-terminus: Hemoglobin subunit beta-2 (135 aa).

In terms of domain architecture, Globin spans 2 to 135; the sequence is HWTAEEKALV…VVDALSKGYH (134 aa). Heme b-binding residues include His57 and His81.

The protein belongs to the globin family. As to quaternary structure, hb 2 is a heterotetramer of two alpha and two beta-2 chains. In terms of tissue distribution, red blood cells (at protein level).

In terms of biological role, involved in oxygen transport from gills to the various peripheral tissues. The polypeptide is Hemoglobin subunit beta-2 (Somniosus microcephalus (Greenland sleeper shark)).